Consider the following 1142-residue polypeptide: Protein kinase C-like (1142 aa).

Positions 1–67 (MNDEDKVHDI…LRELQMRRLG (67 aa)) constitute an REM-1 1 domain. The disordered stretch occupies residues 70 to 139 (VDNMSLGASP…PPDSNVPRAR (70 aa)). The region spanning 149–226 (KFDTPHLGPR…LKRYEELHID (78 aa)) is the REM-1 2 domain. Residues 231 to 349 (GPDDDSINLP…LRRKKIEAEM (119 aa)) enclose the C2 domain. The disordered stretch occupies residues 357–403 (ADRVGSRAPPPQFPMGAQSPQFAAPPTSPGSQEQNTMIPPQAPPPSQ). Residues 385–394 (PGSQEQNTMI) show a composition bias toward polar residues. 2 consecutive Phorbol-ester/DAG-type zinc fingers follow at residues 457–505 (GHKF…VTKC) and 525–576 (PHRF…PDFC). 2 disordered regions span residues 592–622 (TQKKTHKDKASSMSERTLRPGSKTSISSGSI) and 651–807 (SQTT…TDPG). Positions 613–622 (SKTSISSGSI) are enriched in polar residues. Low complexity-rich tracts occupy residues 663–677 (TSTSSTTASAAAAAA), 712–724 (SAQQQQGYGSPQQ), and 741–765 (PQARPQQQQQQQQQTPQQVSPMYQQ). In terms of domain architecture, Protein kinase spans 817–1076 (FNFLAVLGKG…AQEIMSQPFF (260 aa)). ATP is bound by residues 823–831 (LGKGNFGKV) and Lys-846. Catalysis depends on Asp-942, which acts as the Proton acceptor. Residues 1077 to 1142 (RNINWDDIYH…RGFSYTADFE (66 aa)) form the AGC-kinase C-terminal domain.

The protein belongs to the protein kinase superfamily. AGC Ser/Thr protein kinase family. PKC subfamily.

The catalysed reaction is L-seryl-[protein] + ATP = O-phospho-L-seryl-[protein] + ADP + H(+). The enzyme catalyses L-threonyl-[protein] + ATP = O-phospho-L-threonyl-[protein] + ADP + H(+). The polypeptide is Protein kinase C-like (Neurospora crassa (strain ATCC 24698 / 74-OR23-1A / CBS 708.71 / DSM 1257 / FGSC 987)).